The sequence spans 166 residues: Crossover junction endodeoxyribonuclease RuvC (166 aa).

Residues aspartate 11, glutamate 71, and aspartate 142 contribute to the active site. Mg(2+) is bound by residues aspartate 11, glutamate 71, and aspartate 142.

The protein belongs to the RuvC family. As to quaternary structure, homodimer which binds Holliday junction (HJ) DNA. The HJ becomes 2-fold symmetrical on binding to RuvC with unstacked arms; it has a different conformation from HJ DNA in complex with RuvA. In the full resolvosome a probable DNA-RuvA(4)-RuvB(12)-RuvC(2) complex forms which resolves the HJ. It depends on Mg(2+) as a cofactor.

Its subcellular location is the cytoplasm. The enzyme catalyses Endonucleolytic cleavage at a junction such as a reciprocal single-stranded crossover between two homologous DNA duplexes (Holliday junction).. Functionally, the RuvA-RuvB-RuvC complex processes Holliday junction (HJ) DNA during genetic recombination and DNA repair. Endonuclease that resolves HJ intermediates. Cleaves cruciform DNA by making single-stranded nicks across the HJ at symmetrical positions within the homologous arms, yielding a 5'-phosphate and a 3'-hydroxyl group; requires a central core of homology in the junction. The consensus cleavage sequence is 5'-(A/T)TT(C/G)-3'. Cleavage occurs on the 3'-side of the TT dinucleotide at the point of strand exchange. HJ branch migration catalyzed by RuvA-RuvB allows RuvC to scan DNA until it finds its consensus sequence, where it cleaves and resolves the cruciform DNA. This is Crossover junction endodeoxyribonuclease RuvC from Maricaulis maris (strain MCS10) (Caulobacter maris).